The chain runs to 322 residues: Aspartate carbamoyltransferase catalytic subunit (322 aa).

Residues R65 and T66 each contribute to the carbamoyl phosphate site. K93 provides a ligand contact to L-aspartate. Residues R115, H143, and Q146 each contribute to the carbamoyl phosphate site. Positions 176 and 230 each coordinate L-aspartate. Carbamoyl phosphate contacts are provided by G271 and P272.

Belongs to the aspartate/ornithine carbamoyltransferase superfamily. ATCase family. As to quaternary structure, heterododecamer (2C3:3R2) of six catalytic PyrB chains organized as two trimers (C3), and six regulatory PyrI chains organized as three dimers (R2).

It carries out the reaction carbamoyl phosphate + L-aspartate = N-carbamoyl-L-aspartate + phosphate + H(+). It participates in pyrimidine metabolism; UMP biosynthesis via de novo pathway; (S)-dihydroorotate from bicarbonate: step 2/3. Catalyzes the condensation of carbamoyl phosphate and aspartate to form carbamoyl aspartate and inorganic phosphate, the committed step in the de novo pyrimidine nucleotide biosynthesis pathway. This chain is Aspartate carbamoyltransferase catalytic subunit, found in Brucella abortus (strain S19).